The sequence spans 69 residues: Cytochrome c oxidase subunit 8A, mitochondrial (69 aa).

The transit peptide at 1–25 (MSVLTSLLLRGLTGSARRLPVPRAK) directs the protein to the mitochondrion. The short motif at 2-19 (SVLTSLLLRGLTGSARRL) is the SIFI-degron element. Residues 26–36 (VHSMPPEEELG) lie on the Mitochondrial matrix side of the membrane. Residues 37 to 60 (TLEKAIALTSCFVSLFLPAGWILS) form a helical membrane-spanning segment. The Mitochondrial intermembrane segment spans residues 61–69 (HLEDYKRPE).

This sequence belongs to the cytochrome c oxidase VIII family. As to quaternary structure, component of the cytochrome c oxidase (complex IV, CIV), a multisubunit enzyme composed of 14 subunits. The complex is composed of a catalytic core of 3 subunits MT-CO1, MT-CO2 and MT-CO3, encoded in the mitochondrial DNA, and 11 supernumerary subunits COX4I, COX5A, COX5B, COX6A, COX6B, COX6C, COX7A, COX7B, COX7C, COX8 and NDUFA4, which are encoded in the nuclear genome. The complex exists as a monomer or a dimer and forms supercomplexes (SCs) in the inner mitochondrial membrane with NADH-ubiquinone oxidoreductase (complex I, CI) and ubiquinol-cytochrome c oxidoreductase (cytochrome b-c1 complex, complex III, CIII), resulting in different assemblies (supercomplex SCI(1)III(2)IV(1) and megacomplex MCI(2)III(2)IV(2)). In terms of processing, in response to mitochondrial stress, the precursor protein is ubiquitinated by the SIFI complex in the cytoplasm before mitochondrial import, leading to its degradation. Within the SIFI complex, UBR4 initiates ubiquitin chain that are further elongated or branched by KCMF1.

The protein resides in the mitochondrion inner membrane. Its pathway is energy metabolism; oxidative phosphorylation. Component of the cytochrome c oxidase, the last enzyme in the mitochondrial electron transport chain which drives oxidative phosphorylation. The respiratory chain contains 3 multisubunit complexes succinate dehydrogenase (complex II, CII), ubiquinol-cytochrome c oxidoreductase (cytochrome b-c1 complex, complex III, CIII) and cytochrome c oxidase (complex IV, CIV), that cooperate to transfer electrons derived from NADH and succinate to molecular oxygen, creating an electrochemical gradient over the inner membrane that drives transmembrane transport and the ATP synthase. Cytochrome c oxidase is the component of the respiratory chain that catalyzes the reduction of oxygen to water. Electrons originating from reduced cytochrome c in the intermembrane space (IMS) are transferred via the dinuclear copper A center (CU(A)) of subunit 2 and heme A of subunit 1 to the active site in subunit 1, a binuclear center (BNC) formed by heme A3 and copper B (CU(B)). The BNC reduces molecular oxygen to 2 water molecules using 4 electrons from cytochrome c in the IMS and 4 protons from the mitochondrial matrix. The polypeptide is Cytochrome c oxidase subunit 8A, mitochondrial (COX8A) (Papio anubis (Olive baboon)).